The sequence spans 37 residues: Large ribosomal subunit protein bL36 (37 aa).

This sequence belongs to the bacterial ribosomal protein bL36 family.

The chain is Large ribosomal subunit protein bL36 from Symbiobacterium thermophilum (strain DSM 24528 / JCM 14929 / IAM 14863 / T).